A 139-amino-acid polypeptide reads, in one-letter code: MLRTMMKSKIHRATVTQADLHYVGSVTVDEDLLDAADLLPGELVHIVDIDNGARLETYTIAGERGSGVIGINGAAARLVHPGDLVILIAYGQMEDVEAKGFEPHVVFVDADNRVVSTGSDPADAPAGSGLLRGDRPAGR.

Ser-25 acts as the Schiff-base intermediate with substrate; via pyruvic acid in catalysis. Residue Ser-25 is modified to Pyruvic acid (Ser). Position 57 (Thr-57) interacts with substrate. Tyr-58 (proton donor) is an active-site residue. 73 to 75 is a substrate binding site; it reads GAA. The segment at 117–139 is disordered; sequence TGSDPADAPAGSGLLRGDRPAGR.

The protein belongs to the PanD family. Heterooctamer of four alpha and four beta subunits. Pyruvate serves as cofactor. Post-translationally, is synthesized initially as an inactive proenzyme, which is activated by self-cleavage at a specific serine bond to produce a beta-subunit with a hydroxyl group at its C-terminus and an alpha-subunit with a pyruvoyl group at its N-terminus.

Its subcellular location is the cytoplasm. It carries out the reaction L-aspartate + H(+) = beta-alanine + CO2. Its pathway is cofactor biosynthesis; (R)-pantothenate biosynthesis; beta-alanine from L-aspartate: step 1/1. Catalyzes the pyruvoyl-dependent decarboxylation of aspartate to produce beta-alanine. The polypeptide is Aspartate 1-decarboxylase (Nocardioides sp. (strain ATCC BAA-499 / JS614)).